Here is a 248-residue protein sequence, read N- to C-terminus: 2,3-bisphosphoglycerate-dependent phosphoglycerate mutase (248 aa).

Substrate contacts are provided by residues 8–15 (RHGESVWN), 21–22 (TG), Arg60, 87–90 (ERHY), Lys98, and 114–115 (RR). Residue His9 is the Tele-phosphohistidine intermediate of the active site. The active-site Proton donor/acceptor is Glu87. The tract at residues 116-135 (SYDTPPPPMEVSDPRHPSHD) is disordered. 183-184 (GN) lines the substrate pocket.

Belongs to the phosphoglycerate mutase family. BPG-dependent PGAM subfamily. In terms of assembly, homodimer.

The enzyme catalyses (2R)-2-phosphoglycerate = (2R)-3-phosphoglycerate. It participates in carbohydrate degradation; glycolysis; pyruvate from D-glyceraldehyde 3-phosphate: step 3/5. Catalyzes the interconversion of 2-phosphoglycerate and 3-phosphoglycerate. The sequence is that of 2,3-bisphosphoglycerate-dependent phosphoglycerate mutase from Bdellovibrio bacteriovorus (strain ATCC 15356 / DSM 50701 / NCIMB 9529 / HD100).